Reading from the N-terminus, the 200-residue chain is Large ribosomal subunit protein uL4 (200 aa).

The segment at 38 to 75 is disordered; that stretch reads GRQGSKQQKNRSDVSGGGKRPWRQKGTGRARAGTSRGP.

The protein belongs to the universal ribosomal protein uL4 family. As to quaternary structure, part of the 50S ribosomal subunit.

Functionally, one of the primary rRNA binding proteins, this protein initially binds near the 5'-end of the 23S rRNA. It is important during the early stages of 50S assembly. It makes multiple contacts with different domains of the 23S rRNA in the assembled 50S subunit and ribosome. Forms part of the polypeptide exit tunnel. This chain is Large ribosomal subunit protein uL4, found in Azotobacter vinelandii (strain DJ / ATCC BAA-1303).